The sequence spans 238 residues: Probable transcriptional regulatory protein STER_0242 (238 aa).

It belongs to the TACO1 family. YeeN subfamily.

It is found in the cytoplasm. This chain is Probable transcriptional regulatory protein STER_0242, found in Streptococcus thermophilus (strain ATCC BAA-491 / LMD-9).